A 295-amino-acid chain; its full sequence is (R)-3-hydroxydecanoyl-ACP:CoA transacylase (295 aa).

The AB hydrolase-1 domain occupies Asn-28–Asp-254.

It participates in polyester biosynthesis; polyhydroxyalkanoate biosynthesis. Functionally, catalyzes the transfer of the acyl moiety from in vitro synthesized 3-hydroxydecanoyl-CoA to acyl carrier protein. In Pseudomonas putida (strain ATCC 47054 / DSM 6125 / CFBP 8728 / NCIMB 11950 / KT2440), this protein is (R)-3-hydroxydecanoyl-ACP:CoA transacylase (phaG).